A 378-amino-acid polypeptide reads, in one-letter code: Acetylornithine deacetylase (378 aa).

Histidine 76 is a Zn(2+) binding site. The active site involves aspartate 78. Zn(2+) is bound at residue aspartate 108. The active site involves glutamate 140. Residues glutamate 141, glutamate 165, and histidine 351 each contribute to the Zn(2+) site.

The protein belongs to the peptidase M20A family. ArgE subfamily. Homodimer. Zn(2+) is required as a cofactor. Requires Co(2+) as cofactor. It depends on glutathione as a cofactor.

The protein localises to the cytoplasm. The catalysed reaction is N(2)-acetyl-L-ornithine + H2O = L-ornithine + acetate. The protein operates within amino-acid biosynthesis; L-arginine biosynthesis; L-ornithine from N(2)-acetyl-L-ornithine (linear): step 1/1. Catalyzes the hydrolysis of the amide bond of N(2)-acetylated L-amino acids. Cleaves the acetyl group from N-acetyl-L-ornithine to form L-ornithine, an intermediate in L-arginine biosynthesis pathway, and a branchpoint in the synthesis of polyamines. The sequence is that of Acetylornithine deacetylase from Vibrio campbellii (strain ATCC BAA-1116).